Reading from the N-terminus, the 890-residue chain is Translation initiation factor IF-2 (890 aa).

The tract at residues 45-304 (LIDHLNQKNS…LQQGFQKPAQ (260 aa)) is disordered. The segment covering 67–81 (STLNIPGTGGKSKSV) has biased composition (polar residues). The segment covering 92 to 217 (VKRDPQEAER…RMAEENKWTD (126 aa)) has biased composition (basic and acidic residues). Over residues 252-266 (GRGRNAKAARPKKGN) the composition is skewed to basic residues. The segment covering 267-280 (KHSESKADREEARA) has biased composition (basic and acidic residues). A tr-type G domain is found at 389-558 (PRAPVVTIMG…LLQAEVLELK (170 aa)). The segment at 398 to 405 (GHVDHGKT) is G1. 398–405 (GHVDHGKT) provides a ligand contact to GTP. Positions 423–427 (GITQH) are G2. Residues 444-447 (DTPG) are G3. GTP is bound by residues 444–448 (DTPGH) and 498–501 (NKID). The tract at residues 498–501 (NKID) is G4. The tract at residues 534–536 (SAK) is G5. Lys808 bears the N6-acetyllysine mark.

Belongs to the TRAFAC class translation factor GTPase superfamily. Classic translation factor GTPase family. IF-2 subfamily.

It is found in the cytoplasm. Its function is as follows. One of the essential components for the initiation of protein synthesis. Protects formylmethionyl-tRNA from spontaneous hydrolysis and promotes its binding to the 30S ribosomal subunits. Also involved in the hydrolysis of GTP during the formation of the 70S ribosomal complex. This Escherichia fergusonii (strain ATCC 35469 / DSM 13698 / CCUG 18766 / IAM 14443 / JCM 21226 / LMG 7866 / NBRC 102419 / NCTC 12128 / CDC 0568-73) protein is Translation initiation factor IF-2.